A 393-amino-acid polypeptide reads, in one-letter code: GDNF family receptor alpha-like (393 aa).

Residues 1–19 form the signal peptide; the sequence is MLVFIFLAVTLSSENESSS. The Extracellular segment spans residues 20–349; it reads QTNDCAHLIQ…LTGFNSFFNG (330 aa). Asn59, Asn65, Asn101, and Asn115 each carry an N-linked (GlcNAc...) asparagine glycan. 11 cysteine pairs are disulfide-bonded: Cys131–Cys189, Cys138–Cys144, Cys155–Cys167, Cys162–Cys210, Cys191–Cys198, Cys220–Cys291, Cys227–Cys233, Cys244–Cys275, Cys252–Cys258, Cys269–Cys316, and Cys293–Cys304. The required for interaction with GDF15 stretch occupies residues 149-228; sequence ALYLKACSAN…TCLSVIHTCR (80 aa). Residues 350-370 form a helical membrane-spanning segment; the sequence is ELLYVVVCMAVTCGILFLVML. The Cytoplasmic portion of the chain corresponds to 371–393; sequence KLRIQSEKRDPSSIEIAGGVIIQ.

It belongs to the GDNFR family. In terms of assembly, interacts (via the extracellular domain) with GDF15 and RET; receptor of GDF15, mediates cellular signaling through interaction with RET after GDF15-binding. Interaction with RET requires previous GDF15-binding. Post-translationally, cleaved and inactivated by MMP14, inhibiting the GDF15-GFRAL aversive response. In terms of tissue distribution, expressed in the brainstem, restricted to cells in the area postrema and the immediately adjacent region of the nucleus tractus solitarius.

It localises to the cell membrane. Its activity is regulated as follows. Specifically inhibited by 3P10 monoclonal antibody. Strongly activated by LY3463251, a long-acting and stable agonist composed of GDF15 conjugated monomeric human IgG4 Fc. In terms of biological role, brainstem-restricted receptor for GDF15 hormone, which triggers an aversive response, characterized by nausea, vomiting, and/or loss of appetite in response to various stresses. The aversive response is both required to reduce continuing exposure to those stresses at the time of exposure and to promote avoidance behavior in the future. The GDF15-GFRAL aversive response is triggered by stresses, such as anticancer drugs (camptothecin or cisplatin), cancers or drugs such as metformin. Upon interaction with its ligand, GDF15, mediates the GDF15-induced autophosphorylation and activation of the RET tyrosine kinase receptor, leading to activation of MAPK- and AKT- signaling pathways. Ligand-binding activates GFRAL-expressing neurons localized in the area postrema and nucleus tractus solitarius of the brainstem. The GDF15-GFRAL signal induces expression of genes involved in metabolism, such as lipid metabolism in adipose tissues. In Mus musculus (Mouse), this protein is GDNF family receptor alpha-like (Gfral).